Consider the following 132-residue polypeptide: Small ribosomal subunit protein uS8 (132 aa).

The protein belongs to the universal ribosomal protein uS8 family. In terms of assembly, part of the 30S ribosomal subunit. Contacts proteins S5 and S12.

Functionally, one of the primary rRNA binding proteins, it binds directly to 16S rRNA central domain where it helps coordinate assembly of the platform of the 30S subunit. The polypeptide is Small ribosomal subunit protein uS8 (Brevibacillus brevis (strain 47 / JCM 6285 / NBRC 100599)).